Reading from the N-terminus, the 454-residue chain is Glutamine synthetase (454 aa).

The GS beta-grasp domain occupies 19-111 (NNVKFIRFQF…VICDVYKDEK (93 aa)). Positions 118–454 (PRSRLKAILE…DWETGKYLIY (337 aa)) constitute a GS catalytic domain. Mg(2+) contacts are provided by E142 and E144. Residue E194 participates in ATP binding. E199 and E206 together coordinate Mg(2+). Residues 250 to 251 (NG) and G251 contribute to the L-glutamate site. H255 contributes to the Mg(2+) binding site. ATP is bound by residues 257-259 (HQS) and S259. L-glutamate contacts are provided by R309, E315, and R327. ATP contacts are provided by R327, R332, and K339. Residue E344 coordinates Mg(2+). L-glutamate is bound at residue R346.

It belongs to the glutamine synthetase family. As to quaternary structure, oligomer of 12 subunits arranged in the form of two hexagons. Mg(2+) is required as a cofactor.

The protein localises to the cytoplasm. It carries out the reaction L-glutamate + NH4(+) + ATP = L-glutamine + ADP + phosphate + H(+). Its activity is regulated as follows. Feedback inhibited by glycine and alanine, and inhibited by low concentrations of methionine sulfoximine. In terms of biological role, probably involved in nitrogen metabolism via ammonium assimilation. Catalyzes the ATP-dependent biosynthesis of glutamine from glutamate and ammonia. Beta-glutamate is a much poorer substrate than alpha-glutamate. This chain is Glutamine synthetase, found in Methanocaldococcus jannaschii (strain ATCC 43067 / DSM 2661 / JAL-1 / JCM 10045 / NBRC 100440) (Methanococcus jannaschii).